A 2311-amino-acid chain; its full sequence is C2 domain-containing protein 3 (2311 aa).

Disordered regions lie at residues 447–511 and 543–562; these read SDSS…TSRC and GTAV…RPVR. The span at 470-509 shows a compositional bias: basic and acidic residues; that stretch reads IALDRGRHRDNSPSEYKEDAKQTKGNDSLRDSKTSEKSTS. 6 C2 domains span residues 508–666, 751–888, 952–1112, 1136–1303, 1370–1505, and 1581–1713; these read TSRC…SVTC, GNGG…TRLL, LDPP…HRED, PSGL…SGWY, HKRE…TLAV, and KTEV…CGWY. Residues 939-964 are disordered; it reads GTSQTAMPRPAHFLDPPLSSSQMGRP. 5 disordered regions span residues 1536-1589, 1955-1977, 2036-2065, 2084-2233, and 2261-2292; these read PSNS…LLDA, SEAY…GSLN, MTDR…PVNP, NDPS…SNLL, and VREG…PKEE. Basic and acidic residues-rich tracts occupy residues 1565 to 1589 and 1955 to 1964; these read FEEK…LLDA and SEAYEREGQR. Polar residues predominate over residues 2036–2047; sequence MTDRTSPWSSIL. The segment covering 2048-2059 has biased composition (basic and acidic residues); it reads SERDSDSMDHPQ. Residues 2084 to 2095 are compositionally biased toward polar residues; sequence NDPSSVLSSARS. A compositionally biased stretch (acidic residues) spans 2138 to 2151; it reads AESEAESQEMDGDP. Positions 2221–2233 are enriched in polar residues; it reads GSESPQVPPSNLL.

It is found in the cytoplasm. The protein localises to the cytoskeleton. Its subcellular location is the cilium basal body. It localises to the microtubule organizing center. The protein resides in the centrosome. It is found in the centriole. In terms of biological role, component of the centrioles that acts as a positive regulator of centriole elongation. Promotes assembly of centriolar distal appendage, a structure at the distal end of the mother centriole that acts as an anchor of the cilium. Required for primary cilium formation. This is C2 domain-containing protein 3 (c2cd3) from Xenopus tropicalis (Western clawed frog).